A 362-amino-acid chain; its full sequence is Very-long-chain (3R)-3-hydroxyacyl-CoA dehydratase 3 (362 aa).

The residue at position 1 (M1) is an N-acetylmethionine. The Cytoplasmic segment spans residues 1-149 (METQVLTPHV…ETLTNLKKGY (149 aa)). In terms of domain architecture, CS spans 5–94 (VLTPHVYWAQ…KGSHWWERLT (90 aa)). T7 bears the Phosphothreonine mark. The stretch at 111–138 (LDESDAEMELRAKEEERLNKLRLEREGS) forms a coiled coil. Residue S114 is modified to Phosphoserine. The chain crosses the membrane as a helical span at residues 150-170 (LFMYNLVQLLGFSWIFVNLTV). Residues 171 to 189 (RFFILGKESFYDTFHNVAD) lie on the Lumenal side of the membrane. Residues 190–210 (MMYFCQMLALVETLNAAIGVT) form a helical membrane-spanning segment. The Cytoplasmic portion of the chain corresponds to 211-212 (ST). A helical membrane pass occupies residues 213–233 (PVLPALIQFLGRNFILFLVFG). Residues 234-242 (TMEEMQNKA) are Lumenal-facing. The helical transmembrane segment at 243-263 (VVFFVFYSWSAIEIFRYPFYM) threads the bilayer. Residues 264–280 (LSCIDMDWKVLTWLRYT) are Cytoplasmic-facing. The chain crosses the membrane as a helical span at residues 281–301 (MWIPLYPLGCLSEAVAVIQSI). Residues Y286 and E293 contribute to the active site. Over 302 to 322 (PVFNESGRFSFTLPYPVKMKV) the chain is Lumenal. A helical transmembrane segment spans residues 323-343 (RFSFFLQVYLVMLFLGLYINF). The Cytoplasmic portion of the chain corresponds to 344-362 (RHLYKQRRRRYGQKKKKLH).

The protein belongs to the very long-chain fatty acids dehydratase HACD family. As to quaternary structure, may interact with enzymes of the ELO family (including ELOVL1); with those enzymes that mediate condensation, the first of the four steps of the reaction cycle responsible for fatty acids elongation, may be part of a larger fatty acids elongase complex. Interacts with RAC1. Associates with internalized insulin receptor/INSR complexes on Golgi/endosomal membranes; HACD3/PTPLAD1 together with ATIC and PRKAA2/AMPK2 is proposed to be part of a signaling network regulating INSR autophosphorylation and endocytosis.

The protein resides in the endoplasmic reticulum membrane. It carries out the reaction a very-long-chain (3R)-3-hydroxyacyl-CoA = a very-long-chain (2E)-enoyl-CoA + H2O. The catalysed reaction is (3R)-hydroxyhexadecanoyl-CoA = (2E)-hexadecenoyl-CoA + H2O. It participates in lipid metabolism; fatty acid biosynthesis. Its function is as follows. Catalyzes the third of the four reactions of the long-chain fatty acids elongation cycle. This endoplasmic reticulum-bound enzymatic process, allows the addition of two carbons to the chain of long- and very long-chain fatty acids/VLCFAs per cycle. This enzyme catalyzes the dehydration of the 3-hydroxyacyl-CoA intermediate into trans-2,3-enoyl-CoA, within each cycle of fatty acid elongation. Thereby, it participates in the production of VLCFAs of different chain lengths that are involved in multiple biological processes as precursors of membrane lipids and lipid mediators. Involved in Rac1-signaling pathways leading to the modulation of gene expression. Promotes insulin receptor/INSR autophosphorylation and is involved in INSR internalization. This is Very-long-chain (3R)-3-hydroxyacyl-CoA dehydratase 3 from Mus musculus (Mouse).